The primary structure comprises 156 residues: Mediator of RNA polymerase II transcription subunit 28 (156 aa).

Residues 1 to 38 (MDYQQKPPQSSDPSPSPPDRPPGIRSPETPSNNQNNDI) are disordered. Residues 104 to 156 (PSRAESLKKDIAVMEEELKTKDELIKKHMRLFQESQKLVKEQIEKHRDELEKV) adopt a coiled-coil conformation.

Belongs to the Mediator complex subunit 28 family. In terms of assembly, dimers. Component of the Mediator complex. Interacts with GEBPL.

Its subcellular location is the nucleus. Its function is as follows. Component of the Mediator complex, a coactivator involved in the regulated transcription of nearly all RNA polymerase II-dependent genes. Mediator functions as a bridge to convey information from gene-specific regulatory proteins to the basal RNA polymerase II transcription machinery. The Mediator complex, having a compact conformation in its free form, is recruited to promoters by direct interactions with regulatory proteins and serves for the assembly of a functional pre-initiation complex with RNA polymerase II and the general transcription factors. In Arabidopsis thaliana (Mouse-ear cress), this protein is Mediator of RNA polymerase II transcription subunit 28.